A 594-amino-acid chain; its full sequence is U3 small nucleolar RNA-associated protein 18 (594 aa).

Disordered regions lie at residues 48 to 128 and 176 to 200; these read EQEM…WIDS and KWVDDESDSELDDEEDDEEEGSNNV. Composition is skewed to acidic residues over residues 49–72, 102–128, and 180–196; these read QEMDVEDQEDEGSESDNSEEDEAQ, TMDVDDEDDSSSDDYSEDSEEAAWIDS, and DESDSELDDEEDDEEEG. The interval 101–190 is interaction with UTP21; sequence DTMDVDDEDD…ESDSELDDEE (90 aa). Ser182 and Ser184 each carry phosphoserine. WD repeat units follow at residues 246–285, 290–334, 463–504, 513–554, and 560–593; these read PSHSAIQSLSFHPSKPLLLTGGYDKTLRIYHIDGKTNHLV, LVGS…LTHS, GTTT…TSST, QLTT…VFSN, and TPLGKVTSVAFSPSGGLLAVGNEQGKVRLWKLNH.

It belongs to the WD repeat UTP18 family. In terms of assembly, interacts with snoRNA U3. Interacts with MPP10, UTP21 and UTP25. Component of the ribosomal small subunit (SSU) processome composed of at least 40 protein subunits and snoRNA U3.

It is found in the nucleus. It localises to the nucleolus. Its function is as follows. Involved in nucleolar processing of pre-18S ribosomal RNA and ribosome assembly. The sequence is that of U3 small nucleolar RNA-associated protein 18 (UTP18) from Saccharomyces cerevisiae (strain ATCC 204508 / S288c) (Baker's yeast).